Reading from the N-terminus, the 312-residue chain is Protein dif-1 (312 aa).

Solcar repeat units lie at residues 2 to 93, 102 to 193, and 203 to 289; these read SDVL…GKWL, MTFI…LKKK, and LSPG…TLAA. The next 6 helical transmembrane spans lie at 5–25, 69–89, 104–124, 172–192, 209–229, and 261–282; these read LLNFIAGGVGGSCTVIVGHPF, MAAPLVGVSPLFAVFFGGCAV, FIQNANAGALAGVFTTIVMVP, TLLRDIPASAAYLSVYEYLKK, LMAGGLAGIANWGVCIPADVL, and LFKGFWPVMLRAFPANAACFFG.

It belongs to the mitochondrial carrier (TC 2.A.29) family.

The protein resides in the mitochondrion inner membrane. Seems to play a role in the maintenance of tissue differentiation in the developing embryo, but not for its initiation. The chain is Protein dif-1 (dif-1) from Caenorhabditis elegans.